Reading from the N-terminus, the 219-residue chain is Thiopurine S-methyltransferase (219 aa).

S-adenosyl-L-methionine-binding residues include tryptophan 10, leucine 45, glutamate 66, and arginine 123.

This sequence belongs to the class I-like SAM-binding methyltransferase superfamily. TPMT family.

Its subcellular location is the cytoplasm. It carries out the reaction S-adenosyl-L-methionine + a thiopurine = S-adenosyl-L-homocysteine + a thiopurine S-methylether.. The polypeptide is Thiopurine S-methyltransferase (Bordetella bronchiseptica (strain ATCC BAA-588 / NCTC 13252 / RB50) (Alcaligenes bronchisepticus)).